The chain runs to 263 residues: UPF0758 protein Pden_2304 (263 aa).

One can recognise an MPN domain in the interval 141–263 (VLTSWDALLD…ELSFRSEGLL (123 aa)). The Zn(2+) site is built by H212, H214, and D225. Positions 212 to 225 (HNHPSGDPTPSQAD) match the JAMM motif motif.

It belongs to the UPF0758 family.

The chain is UPF0758 protein Pden_2304 from Paracoccus denitrificans (strain Pd 1222).